The primary structure comprises 611 residues: Mitogen-activated protein kinase 10 (611 aa).

Positions Tyr25–Phe316 constitute a Protein kinase domain. Residues Ile31–Val39 and Lys54 each bind ATP. Residue Asp151 is the Proton acceptor of the active site. Position 187 is a phosphothreonine (Thr187). A TXY motif is present at residues Thr187–Tyr189. Phosphotyrosine is present on Tyr189. The interval Glu394–Glu481 is disordered. The segment covering Glu426–Asp439 has biased composition (basic and acidic residues).

Belongs to the protein kinase superfamily. CMGC Ser/Thr protein kinase family. MAP kinase subfamily. Post-translationally, dually phosphorylated on Thr-187 and Tyr-189, which activates the enzyme.

It carries out the reaction L-seryl-[protein] + ATP = O-phospho-L-seryl-[protein] + ADP + H(+). The enzyme catalyses L-threonyl-[protein] + ATP = O-phospho-L-threonyl-[protein] + ADP + H(+). With respect to regulation, activated by threonine and tyrosine phosphorylation. This Oryza sativa subsp. japonica (Rice) protein is Mitogen-activated protein kinase 10 (MPK10).